A 370-amino-acid chain; its full sequence is Glycerophosphodiester phosphodiesterase GDPD3 (370 aa).

Positions 35-322 constitute a GP-PDE domain; the sequence is FVLMGHRGFG…DMVKDISEAI (288 aa).

Belongs to the glycerophosphoryl diester phosphodiesterase family. Expressed in flowers and siliques.

The enzyme catalyses a sn-glycero-3-phosphodiester + H2O = an alcohol + sn-glycerol 3-phosphate + H(+). This is Glycerophosphodiester phosphodiesterase GDPD3 from Arabidopsis thaliana (Mouse-ear cress).